A 536-amino-acid chain; its full sequence is Fanconi anemia group E protein (536 aa).

The interaction with FANCC stretch occupies residues 150–371; sequence MEGASPLSER…VLTRSLFLGR (222 aa). Positions 171-252 are disordered; that stretch reads LGLGGRRLKS…ADGGSASPIK (82 aa). The span at 230–239 shows a compositional bias: basic and acidic residues; it reads EKERPEHKSL. Phosphoserine is present on S249. At T346 the chain carries Phosphothreonine; by CHEK1. The residue at position 374 (S374) is a Phosphoserine; by CHEK1.

In terms of assembly, belongs to the multisubunit FA complex composed of FANCA, FANCB, FANCC, FANCE, FANCF, FANCG, FANCL/PHF9 and FANCM. The complex is not found in FA patients. Interacts with FANCC and FANCD2. Post-translationally, phosphorylated. Phosphorylation by CHEK1 at Thr-346 and Ser-374 regulates its function in DNA cross-links repair. In terms of processing, ubiquitinated. Phosphorylation by CHEK1 induces polyubiquitination and degradation.

It localises to the nucleus. Its function is as follows. As part of the Fanconi anemia (FA) complex functions in DNA cross-links repair. Required for the nuclear accumulation of FANCC and provides a critical bridge between the FA complex and FANCD2. The polypeptide is Fanconi anemia group E protein (FANCE) (Homo sapiens (Human)).